We begin with the raw amino-acid sequence, 448 residues long: Trigger factor (448 aa).

Positions 160–245 constitute a PPIase FKBP-type domain; it reads GDMLLMKVES…IQEIREEKLP (86 aa).

This sequence belongs to the FKBP-type PPIase family. Tig subfamily.

It localises to the cytoplasm. It carries out the reaction [protein]-peptidylproline (omega=180) = [protein]-peptidylproline (omega=0). Its function is as follows. Involved in protein export. Acts as a chaperone by maintaining the newly synthesized protein in an open conformation. Functions as a peptidyl-prolyl cis-trans isomerase. This chain is Trigger factor, found in Dehalococcoides mccartyi (strain ATCC BAA-2266 / KCTC 15142 / 195) (Dehalococcoides ethenogenes (strain 195)).